A 376-amino-acid chain; its full sequence is UDP-N-acetylglucosamine--N-acetylmuramyl-(pentapeptide) pyrophosphoryl-undecaprenol N-acetylglucosamine transferase (376 aa).

UDP-N-acetyl-alpha-D-glucosamine-binding positions include 12–14 (TGG), asparagine 125, arginine 165, serine 197, and glutamine 296.

This sequence belongs to the glycosyltransferase 28 family. MurG subfamily.

It localises to the cell inner membrane. It catalyses the reaction di-trans,octa-cis-undecaprenyl diphospho-N-acetyl-alpha-D-muramoyl-L-alanyl-D-glutamyl-meso-2,6-diaminopimeloyl-D-alanyl-D-alanine + UDP-N-acetyl-alpha-D-glucosamine = di-trans,octa-cis-undecaprenyl diphospho-[N-acetyl-alpha-D-glucosaminyl-(1-&gt;4)]-N-acetyl-alpha-D-muramoyl-L-alanyl-D-glutamyl-meso-2,6-diaminopimeloyl-D-alanyl-D-alanine + UDP + H(+). It participates in cell wall biogenesis; peptidoglycan biosynthesis. Cell wall formation. Catalyzes the transfer of a GlcNAc subunit on undecaprenyl-pyrophosphoryl-MurNAc-pentapeptide (lipid intermediate I) to form undecaprenyl-pyrophosphoryl-MurNAc-(pentapeptide)GlcNAc (lipid intermediate II). The polypeptide is UDP-N-acetylglucosamine--N-acetylmuramyl-(pentapeptide) pyrophosphoryl-undecaprenol N-acetylglucosamine transferase (Protochlamydia amoebophila (strain UWE25)).